A 97-amino-acid polypeptide reads, in one-letter code: Serine protease inhibitor Kazal-type 13 (97 aa).

An N-terminal signal peptide occupies residues 1–26 (MKRSGCWHQRMLLSLVLLTWTHVTFS). Asn-33 is a glycosylation site (N-linked (GlcNAc...) asparagine). The Kazal-like domain maps to 36 to 97 (RWPKPPCKMY…IQFVKYGKCE (62 aa)). Intrachain disulfides connect Cys-42-Cys-78, Cys-56-Cys-75, and Cys-64-Cys-96.

The protein resides in the secreted. Its function is as follows. May be a serine protease inhibitor. Essential for sperm maturation and fertility. Inhibits sperm acrosome reaction, protecting sperm from premature reaction. This Mus musculus (Mouse) protein is Serine protease inhibitor Kazal-type 13 (Spink13).